The sequence spans 147 residues: MPGKKAPNGLFAARKLERKRLKFRWSQREFKRRMLKLKEKYDPLEGAPMARGIVLEKVGVEARKPNSAVRKCVRVQLVKNGKVVTAFVPGDGGLNVISEHDEVVIVGIGGPRGRSMGDIPGVRYKVVLVNGVSLDAILKGKKQKPVR.

The protein belongs to the universal ribosomal protein uS12 family. As to quaternary structure, part of the 30S ribosomal subunit.

With S4 and S5 plays an important role in translational accuracy. Located at the interface of the 30S and 50S subunits. The protein is Small ribosomal subunit protein uS12 of Ignicoccus hospitalis (strain KIN4/I / DSM 18386 / JCM 14125).